The chain runs to 412 residues: Adherens junction-associated protein 1 (412 aa).

Residues 1 to 43 (MWIQQLLGLSSMSIRWPGRSLGSHAWILIAMLQLAVDFPSCDS) form the signal peptide. At 44–284 (LGPGPEFRLL…GETSGLAVHQ (241 aa)) the chain is on the extracellular side. Disordered regions lie at residues 62–175 (LWSL…GRPT) and 243–271 (DPWK…IQPP). Low complexity predominate over residues 121–146 (PPAATRSSPSLASATASSSIVTAGAA). A compositionally biased stretch (basic and acidic residues) spans 160–171 (HDTEFNDFDFRG). Low complexity predominate over residues 248–263 (TPVGVSTTEPSTSPSS). Residues 285 to 305 (IITITVSLIMVIAALITTLVL) traverse the membrane as a helical segment. Residues 305–412 (LKNCCAPSGH…VSEKWFEISC (108 aa)) are targeting signals. Over 306–412 (KNCCAPSGHT…VSEKWFEISC (107 aa)) the chain is Cytoplasmic.

In terms of assembly, forms a complex with CDH1 and CTNNB1; interacts directly with CTNNB1. Interacts with AP1M2 and isoform 2 of BSG/CD147.

Its subcellular location is the basolateral cell membrane. It is found in the apical cell membrane. The protein resides in the cell junction. The protein localises to the adherens junction. In terms of biological role, plays a role in cell adhesion and cell migration. The polypeptide is Adherens junction-associated protein 1 (Ajap1) (Mus musculus (Mouse)).